Here is a 210-residue protein sequence, read N- to C-terminus: Coatomer subunit zeta-2 (210 aa).

The segment covering 1-12 (MQRPEAWPRPHP) has biased composition (basic and acidic residues). The tract at residues 1 to 34 (MQRPEAWPRPHPGEGAAAAQAGGPAPPARAGEPS) is disordered. The segment covering 13–34 (GEGAAAAQAGGPAPPARAGEPS) has biased composition (low complexity).

It belongs to the adaptor complexes small subunit family. As to quaternary structure, oligomeric complex.

It localises to the cytoplasm. The protein localises to the endoplasmic reticulum-Golgi intermediate compartment membrane. Its subcellular location is the golgi apparatus membrane. The protein resides in the cytoplasmic vesicle. It is found in the COPI-coated vesicle membrane. Functionally, the coatomer is a cytosolic protein complex that binds to dilysine motifs and reversibly associates with Golgi non-clathrin-coated vesicles, which further mediate biosynthetic protein transport from the ER, via the Golgi up to the trans Golgi network. Coatomer complex is required for budding from Golgi membranes, and is essential for the retrograde Golgi-to-ER transport of dilysine-tagged proteins. The zeta subunit may be involved in regulating the coat assembly and, hence, the rate of biosynthetic protein transport due to its association-dissociation properties with the coatomer complex. The sequence is that of Coatomer subunit zeta-2 (COPZ2) from Homo sapiens (Human).